Reading from the N-terminus, the 340-residue chain is Lipopolysaccharide core biosynthesis glycosyltransferase LpsE (340 aa).

This sequence belongs to the glycosyltransferase group 1 family. Glycosyltransferase 4 subfamily.

It functions in the pathway bacterial outer membrane biogenesis; LPS core biosynthesis. This chain is Lipopolysaccharide core biosynthesis glycosyltransferase LpsE (lpsE), found in Rhizobium meliloti (strain 1021) (Ensifer meliloti).